Consider the following 1234-residue polypeptide: Chromosome-associated kinesin KIF4B (1234 aa).

The Kinesin motor domain occupies 9–336 (PVRVALRCRP…LRYADRARKI (328 aa)). Residue 88-95 (GQTGSGKT) participates in ATP binding. Positions 350-999 (ELNHLKQQVQ…IKQKLILLQV (650 aa)) form a coiled coil. Ser394 bears the Phosphoserine mark. Disordered regions lie at residues 494–513 (EEAQ…AFTT) and 712–737 (KRLK…HGKE). Polar residues predominate over residues 498–513 (VETSPETSRSSDAFTT). Positions 663–1234 (QWKQKKDKEV…GCSPIEEEAH (572 aa)) are interaction with PRC1. Residues 713-737 (RLKDALQKQREVTDKRKETQSHGKE) show a composition bias toward basic and acidic residues. The Nuclear localization signal motif lies at 793-798 (PKLRKC). Phosphothreonine is present on Thr799. A phosphoserine mark is found at Ser801, Ser951, Ser1001, Ser1013, Ser1017, and Ser1028. The globular stretch occupies residues 1000–1234 (ASRQKHLPND…GCSPIEEEAH (235 aa)). Disordered regions lie at residues 1007-1030 (PNDT…PSRV), 1052-1076 (VNEH…KPTK), 1122-1143 (RQQG…GSFK), and 1183-1234 (TAPA…EEAH). Residues 1056 to 1071 (EDGDGDGDSDEGDDEE) show a composition bias toward acidic residues. A CRD; required for [4Fe-4S] cluster binding and localization to the spindle midzone and midbody during anaphase and telophase region spans residues 1086–1144 (QGCSCKGWCGNKQCGCRKQKSDCGVDCSCDPTKCRNRQQGKDSLGTVEQTQDSEGSFKL). A Phosphoserine modification is found at Ser1128. Phosphothreonine is present on Thr1183. Ser1188 carries the phosphoserine modification. Residue Lys1196 forms a Glycyl lysine isopeptide (Lys-Gly) (interchain with G-Cter in SUMO2) linkage. Phosphoserine is present on Ser1227.

This sequence belongs to the TRAFAC class myosin-kinesin ATPase superfamily. Kinesin family. Chromokinesin subfamily. Requires [2Fe-2S] cluster as cofactor. [4Fe-4S] cluster serves as cofactor. In terms of tissue distribution, specifically expressed in testis.

It localises to the nucleus matrix. The protein resides in the cytoplasm. Its subcellular location is the cytoskeleton. Iron-sulfur (Fe-S) cluster binding motor protein that has a role in chromosome segregation during mitosis. Translocates PRC1 to the plus ends of interdigitating spindle microtubules during the metaphase to anaphase transition, an essential step for the formation of an organized central spindle midzone and midbody and for successful cytokinesis. May play a role in mitotic chromosomal positioning and bipolar spindle stabilization. This chain is Chromosome-associated kinesin KIF4B (KIF4B), found in Homo sapiens (Human).